The sequence spans 649 residues: PTS system mannitol-specific EIICBA component (649 aa).

Residues 13-342 enclose the PTS EIIC type-2 domain; it reads FGRFLSNMVM…LLMKAQTSTE (330 aa). The next 6 membrane-spanning stretches (helical) occupy residues 25-46, 51-71, 135-156, 166-186, 274-293, and 314-335; these read IGAF…WVPN, SLVG…TGGK, SAGI…PFVK, VNFL…EPAK, AIAG…AGLV, and LGVV…ALLM. Positions 384–475 constitute a PTS EIIB type-2 domain; the sequence is QSIIVACDAG…LVTQLLAAKR (92 aa). The active-site Phosphocysteine intermediate; for EIIB activity is C390. At C390 the chain carries Phosphocysteine; by EIIA. The PTS EIIA type-2 domain occupies 504–646; it reads FQLQKENIHL…SDVLSILATS (143 aa). H564 acts as the Tele-phosphohistidine intermediate; for EIIA activity in catalysis. H564 carries the phosphohistidine; by HPr modification.

As to quaternary structure, homodimer. An intramolecular phosphotransfer takes places between His-564 and Cys-390.

Its subcellular location is the cell inner membrane. The enzyme catalyses D-mannitol(out) + N(pros)-phospho-L-histidyl-[protein] = D-mannitol 1-phosphate(in) + L-histidyl-[protein]. Functionally, the phosphoenolpyruvate-dependent sugar phosphotransferase system (sugar PTS), a major carbohydrate active transport system, catalyzes the phosphorylation of incoming sugar substrates concomitantly with their translocation across the cell membrane. This system is involved in D-mannitol transport. The sequence is that of PTS system mannitol-specific EIICBA component (mtlA) from Vibrio cholerae serotype O1 (strain ATCC 39315 / El Tor Inaba N16961).